The chain runs to 233 residues: Phosphatidylserine decarboxylase proenzyme (233 aa).

Serine 201 serves as the catalytic Schiff-base intermediate with substrate; via pyruvic acid. Serine 201 carries the post-translational modification Pyruvic acid (Ser); by autocatalysis.

The protein belongs to the phosphatidylserine decarboxylase family. PSD-A subfamily. Heterodimer of a large membrane-associated beta subunit and a small pyruvoyl-containing alpha subunit. Pyruvate serves as cofactor. In terms of processing, is synthesized initially as an inactive proenzyme. Formation of the active enzyme involves a self-maturation process in which the active site pyruvoyl group is generated from an internal serine residue via an autocatalytic post-translational modification. Two non-identical subunits are generated from the proenzyme in this reaction, and the pyruvate is formed at the N-terminus of the alpha chain, which is derived from the carboxyl end of the proenzyme. The post-translation cleavage follows an unusual pathway, termed non-hydrolytic serinolysis, in which the side chain hydroxyl group of the serine supplies its oxygen atom to form the C-terminus of the beta chain, while the remainder of the serine residue undergoes an oxidative deamination to produce ammonia and the pyruvoyl prosthetic group on the alpha chain.

Its subcellular location is the cell membrane. It catalyses the reaction a 1,2-diacyl-sn-glycero-3-phospho-L-serine + H(+) = a 1,2-diacyl-sn-glycero-3-phosphoethanolamine + CO2. It participates in phospholipid metabolism; phosphatidylethanolamine biosynthesis; phosphatidylethanolamine from CDP-diacylglycerol: step 2/2. Its function is as follows. Catalyzes the formation of phosphatidylethanolamine (PtdEtn) from phosphatidylserine (PtdSer). This Mycolicibacterium vanbaalenii (strain DSM 7251 / JCM 13017 / BCRC 16820 / KCTC 9966 / NRRL B-24157 / PYR-1) (Mycobacterium vanbaalenii) protein is Phosphatidylserine decarboxylase proenzyme.